Consider the following 143-residue polypeptide: Ribosome-binding factor A (143 aa).

The disordered stretch occupies residues 1–20 (MRFMGKNKFHTGPGPSQRQL).

The protein belongs to the RbfA family. Monomer. Binds 30S ribosomal subunits, but not 50S ribosomal subunits or 70S ribosomes.

The protein resides in the cytoplasm. One of several proteins that assist in the late maturation steps of the functional core of the 30S ribosomal subunit. Associates with free 30S ribosomal subunits (but not with 30S subunits that are part of 70S ribosomes or polysomes). Required for efficient processing of 16S rRNA. May interact with the 5'-terminal helix region of 16S rRNA. This Roseobacter denitrificans (strain ATCC 33942 / OCh 114) (Erythrobacter sp. (strain OCh 114)) protein is Ribosome-binding factor A.